The following is a 61-amino-acid chain: Small ribosomal subunit protein uS14 (61 aa).

Zn(2+) is bound by residues C24, C27, C40, and C43.

It belongs to the universal ribosomal protein uS14 family. Zinc-binding uS14 subfamily. Part of the 30S ribosomal subunit. Contacts proteins S3 and S10. The cofactor is Zn(2+).

In terms of biological role, binds 16S rRNA, required for the assembly of 30S particles and may also be responsible for determining the conformation of the 16S rRNA at the A site. In Streptococcus pyogenes serotype M49 (strain NZ131), this protein is Small ribosomal subunit protein uS14.